Consider the following 361-residue polypeptide: Neuronal-specific septin-3 (361 aa).

A disordered region spans residues 1–46; that stretch reads MSEIVPPEVRPKPAVPAKPSHVAPPSSAPFVPSPQGTGGEGQGSGR. Residues 15-34 show a composition bias toward low complexity; it reads VPAKPSHVAPPSSAPFVPSP. Residues 36 to 46 show a composition bias toward gly residues; sequence GTGGEGQGSGR. The 273-residue stretch at 70-342 folds into the Septin-type G domain; that stretch reads AGFDFNIMVV…ETYRAKRLND (273 aa). Positions 80 to 87 are G1 motif; sequence GQSGLGKS. GTP contacts are provided by residues 80–87 and Thr114; that span reads GQSGLGKS. The interval 137 to 140 is G3 motif; that stretch reads DTPG. The segment at 219 to 222 is G4 motif; that stretch reads AKSD. GTP contacts are provided by residues 220 to 228, Gly276, and Arg291; that span reads KSDTLTPEE. Residues 341 to 361 form a disordered region; it reads NDNGGLHPISSSGHDTQESNL. The segment covering 349–361 has biased composition (polar residues); sequence ISSSGHDTQESNL.

It belongs to the TRAFAC class TrmE-Era-EngA-EngB-Septin-like GTPase superfamily. Septin GTPase family.

It is found in the cytoplasm. Its function is as follows. May be involved in cytokinesis. The sequence is that of Neuronal-specific septin-3 from Danio rerio (Zebrafish).